Consider the following 303-residue polypeptide: Acetaldehyde dehydrogenase (303 aa).

Cys131 functions as the Acyl-thioester intermediate in the catalytic mechanism. NAD(+) contacts are provided by residues 162–170 (SVGPGTRAN) and Asn273.

This sequence belongs to the acetaldehyde dehydrogenase family.

It catalyses the reaction acetaldehyde + NAD(+) + CoA = acetyl-CoA + NADH + H(+). This Marinomonas sp. (strain MWYL1) protein is Acetaldehyde dehydrogenase.